The primary structure comprises 204 residues: Proteasome subunit beta 1 (204 aa).

The propeptide at 1 to 9 is removed in mature form; by autocatalysis; that stretch reads MSYEYGTGA. Catalysis depends on threonine 10, which acts as the Nucleophile.

This sequence belongs to the peptidase T1B family. In terms of assembly, the 20S proteasome core is composed of 14 alpha and 14 beta subunits that assemble into four stacked heptameric rings, resulting in a barrel-shaped structure. The two inner rings, each composed of seven catalytic beta subunits, are sandwiched by two outer rings, each composed of seven alpha subunits. The catalytic chamber with the active sites is on the inside of the barrel. Has a gated structure, the ends of the cylinder being occluded by the N-termini of the alpha-subunits. Is capped at one or both ends by the proteasome regulatory ATPase, PAN.

The protein localises to the cytoplasm. The enzyme catalyses Cleavage of peptide bonds with very broad specificity.. The formation of the proteasomal ATPase PAN-20S proteasome complex, via the docking of the C-termini of PAN into the intersubunit pockets in the alpha-rings, triggers opening of the gate for substrate entry. Interconversion between the open-gate and close-gate conformations leads to a dynamic regulation of the 20S proteasome proteolysis activity. Component of the proteasome core, a large protease complex with broad specificity involved in protein degradation. This is Proteasome subunit beta 1 from Hyperthermus butylicus (strain DSM 5456 / JCM 9403 / PLM1-5).